We begin with the raw amino-acid sequence, 320 residues long: Putative GDP-polyphosphate phosphotransferase PKK2A (320 aa).

3 disordered regions span residues 1–21 (MRKKKDGQNLPDFRKNPPKLD), 246–267 (RPLPEIPHRPDSESDYVRPPRD), and 281–320 (EERIKKEEKAKKAKKPAKAAGKNSDKQKSSGGKGKKKSKK). Residues 12–21 (DFRKNPPKLD) show a composition bias toward basic and acidic residues. The segment covering 281-290 (EERIKKEEKA) has biased composition (basic and acidic residues).

It belongs to the polyphosphate kinase 2 (PPK2) family. Class I subfamily.

It catalyses the reaction [phosphate](n) + GTP = [phosphate](n+1) + GDP. In Corynebacterium glutamicum (strain ATCC 13032 / DSM 20300 / JCM 1318 / BCRC 11384 / CCUG 27702 / LMG 3730 / NBRC 12168 / NCIMB 10025 / NRRL B-2784 / 534), this protein is Putative GDP-polyphosphate phosphotransferase PKK2A.